We begin with the raw amino-acid sequence, 230 residues long: Sugar fermentation stimulation protein homolog (230 aa).

Belongs to the SfsA family.

The protein is Sugar fermentation stimulation protein homolog of Pelobacter propionicus (strain DSM 2379 / NBRC 103807 / OttBd1).